The primary structure comprises 215 residues: Probable phosphoglycerate mutase GpmB (215 aa).

Substrate is bound by residues 8–15 (RHGETQWN), 21–22 (QG), arginine 58, lysine 60, 82–85 (ELDM), 104–105 (RR), and 151–152 (GI). Histidine 9 serves as the catalytic Tele-phosphohistidine intermediate. The active-site Proton donor/acceptor is glutamate 82.

This sequence belongs to the phosphoglycerate mutase family. GpmB subfamily.

The catalysed reaction is (2R)-2-phosphoglycerate = (2R)-3-phosphoglycerate. Its pathway is carbohydrate degradation; glycolysis; pyruvate from D-glyceraldehyde 3-phosphate: step 3/5. This Salmonella paratyphi A (strain AKU_12601) protein is Probable phosphoglycerate mutase GpmB.